The primary structure comprises 445 residues: Acetylcholine-gated chloride channel subunit acc-2 (445 aa).

The first 26 residues, 1 to 26, serve as a signal peptide directing secretion; that stretch reads MIFTLLSTLPVLIITTELDYSELVHS. Residues 27–258 lie on the Extracellular side of the membrane; the sequence is AELVSSSSYI…LHVTIIFERR (232 aa). N-linked (GlcNAc...) asparagine glycosylation is found at N46, N59, N121, and N162. C177 and C191 are oxidised to a cystine. The N-linked (GlcNAc...) asparagine glycan is linked to N218. A helical transmembrane segment spans residues 259–279; it reads FIWYFMQAYLPTYLTIFISWI. The Cytoplasmic segment spans residues 280-286; sequence SFSLGSR. Residues 287–307 form a helical membrane-spanning segment; it reads AIPARTMLGVNSLLAIVFSFG. Residues 308 to 326 are Extracellular-facing; that stretch reads NIMRNLPRVSYIKGIDVWM. The chain crosses the membrane as a helical span at residues 327–347; sequence LVSMTFIFCSLLELAIVGFMV. The Cytoplasmic segment spans residues 348–407; that stretch reads RDETVAKKKQQKKISGNISREESPHGIISERRFMFPPGCSESSKSLSSCTSGWTPERIDS. Residues 408 to 428 form a helical membrane-spanning segment; it reads ISSVMFPFSFFVFNIIYWFYY. Residues 429–445 lie on the Extracellular side of the membrane; sequence IHRKEIIKQNLINRVDG.

It belongs to the ligand-gated ion channel (TC 1.A.9) family. Homopentamer (in vitro). May interact with either acc-3 or acc-4; the interactions do not result in significant heteropentameric ion channel activity. As to expression, expressed in RIA, RIG, PHA and AIZ glutamatergic neurons, URX and RIH cholinergic neurons, and in male-specific MCM neurons.

The protein localises to the cell membrane. Acetylcholine-gated chloride channel subunit. Currents in channels are triggered in response to acetylcholine. Channel properties may be modulated by the formation of homomeric and heteromeric channels. This chain is Acetylcholine-gated chloride channel subunit acc-2, found in Caenorhabditis elegans.